The primary structure comprises 321 residues: Putative sulfotransferase vep-2 (321 aa).

The helical transmembrane segment at 11 to 31 (IARVLIIIASISVICITLFIS) threads the bilayer.

To C.elegans C41C4.1 and C18B2.2.

It is found in the membrane. This chain is Putative sulfotransferase vep-2, found in Caenorhabditis elegans.